We begin with the raw amino-acid sequence, 933 residues long: Progesterone receptor (933 aa).

An AF3; mediates transcriptional activation region spans residues 1–164 (MTELKAKGPR…PATQGVLSPL (164 aa)). Positions 1–256 (MTELKAKGPR…AAAGGGAAAV (256 aa)) are disordered. Residues 1–566 (MTELKAKGPR…YSFESLPQKI (566 aa)) form a modulating, Pro-Rich region. Ser-20 bears the Phosphoserine mark. The LXXL motif 1 motif lies at 55–59 (LDGLL). Ser-81 is modified (phosphoserine). Positions 115–119 (LDTLL) match the LXXL motif 2 motif. A phosphoserine mark is found at Ser-130 and Ser-162. Residues 165 to 305 (MSRSGCKAGD…LATTMMDFIH (141 aa)) are mediates transcriptional transrepression. Residues 183-187 (KVLPR) carry the Nuclear localization signal motif. A phosphoserine mark is found at Ser-190 and Ser-213. Residues 220 to 231 (EVEEEDGSESEE) are compositionally biased toward acidic residues. Residues 232 to 246 (SAGPLLKGKPRALGG) are compositionally biased toward low complexity. At Ser-294 the chain carries Phosphoserine; by MAPK1. Residues 335–356 (AXSAFAPPRSSPSASSTPVAVG) are compositionally biased toward low complexity. The disordered stretch occupies residues 335-378 (AXSAFAPPRSSPSASSTPVAVGDFPDCAYPPDAEPKDDAYPLYS). Residue Ser-345 is modified to Phosphoserine; by MAPK. Lys-388 is covalently cross-linked (Glycyl lysine isopeptide (Lys-Gly) (interchain with G-Cter in SUMO); alternate). Lys-388 participates in a covalent cross-link: Glycyl lysine isopeptide (Lys-Gly) (interchain with G-Cter in ubiquitin); alternate. Ser-400 carries the post-translational modification Phosphoserine; by CDK2. The interval 415-452 (PDFPLGPPPPLPPRAPPSRPGEAAVTAAPASASVSSAS) is disordered. The span at 418–433 (PLGPPPPLPPRAPPSR) shows a compositional bias: pro residues. The segment covering 434-452 (PGEAAVTAAPASASVSSAS) has biased composition (low complexity). Residues 456–546 (STLECILYKA…VYPPYLNYLR (91 aa)) form an AF1; mediates transcriptional activation region. Lys-531 is covalently cross-linked (Glycyl lysine isopeptide (Lys-Gly) (interchain with G-Cter in SUMO)). 2 consecutive NR C4-type zinc fingers follow at residues 567–587 (CLIC…CGSC) and 603–627 (CAGR…LRKC). Residues 567 to 639 (CLICGDEASG…AGMVLGGRKF (73 aa)) constitute a DNA-binding region (nuclear receptor). Ser-676 bears the Phosphoserine mark. The 235-residue stretch at 679-913 (QDIQLIPPLI…EFPEMMSEVI (235 aa)) folds into the NR LBD domain. The segment at 687–933 (LINLLMSIEP…MVKPLLFHKK (247 aa)) is AF2; mediates transcriptional activation. Arg-766 serves as a coordination point for progesterone.

It belongs to the nuclear hormone receptor family. In terms of assembly, interacts with SMARD1 and UNC45A. Interacts with CUEDC2; the interaction promotes ubiquitination, decreases sumoylation, and represses transcriptional activity. Interacts with PIAS3; the interaction promotes sumoylation of PR in a hormone-dependent manner, inhibits DNA-binding, and alters nuclear export. Interacts with SP1; the interaction requires ligand-induced phosphorylation on Ser-345 by ERK1/2-MAPK. Interacts with PRMT2. Interacts with NCOA2 and NCOA1. Interacts with KLF9. Interacts with GTF2B. Post-translationally, phosphorylated on multiple serine sites. Several of these sites are hormone-dependent. Phosphorylation on Ser-294 is highly hormone-dependent and modulates ubiquitination and sumoylation on Lys-388. Phosphorylation on Ser-102 and Ser-345 requires induction by hormone. Basal phosphorylation on Ser-81, Ser-162, Ser-190 and Ser-400 is increased in response to progesterone and can be phosphorylated in vitro by the CDK2-A1 complex. Increased levels of phosphorylation on Ser-400 also in the presence of EGF, heregulin, IGF, PMA and FBS. Phosphorylation at this site by CDK2 is ligand-independent, and increases nuclear translocation and transcriptional activity. Phosphorylation at Ser-162 and Ser-294, but not at Ser-190, is impaired during the G(2)/M phase of the cell cycle. Phosphorylation on Ser-345 by ERK1/2 MAPK is required for interaction with SP1. Sumoylation is hormone-dependent and represses transcriptional activity. Sumoylation on all three sites is enhanced by PIAS3. Desumoylated by SENP1. Sumoylation on Lys-388, the main site of sumoylation, is repressed by ubiquitination on the same site, and modulated by phosphorylation at Ser-294. In terms of processing, ubiquitination is hormone-dependent and represses sumoylation on the same site. Promoted by MAPK-mediated phosphorylation on Ser-294. Ubiquitinated by UBR5, leading to its degradation: UBR5 specifically recognizes and binds ligand-bound PGR when it is not associated with coactivators (NCOAs). In presence of NCOAs, the UBR5-degron is not accessible, preventing its ubiquitination and degradation. Post-translationally, palmitoylated by ZDHHC7 and ZDHHC21. Palmitoylation is required for plasma membrane targeting and for rapid intracellular signaling via ERK and AKT kinases and cAMP generation.

It is found in the nucleus. Its subcellular location is the cytoplasm. Its function is as follows. The steroid hormones and their receptors are involved in the regulation of eukaryotic gene expression and affect cellular proliferation and differentiation in target tissues. Transcriptional activator of several progesteron-dependent promoters in a variety of cell types. Involved in activation of SRC-dependent MAPK signaling on hormone stimulation. This is Progesterone receptor (PGR) from Pan troglodytes (Chimpanzee).